A 499-amino-acid polypeptide reads, in one-letter code: UDP-N-acetylmuramoylalanine--D-glutamate ligase (499 aa).

Position 129–135 (Gly-129–Thr-135) interacts with ATP.

The protein belongs to the MurCDEF family.

The protein localises to the cytoplasm. The catalysed reaction is UDP-N-acetyl-alpha-D-muramoyl-L-alanine + D-glutamate + ATP = UDP-N-acetyl-alpha-D-muramoyl-L-alanyl-D-glutamate + ADP + phosphate + H(+). It functions in the pathway cell wall biogenesis; peptidoglycan biosynthesis. Cell wall formation. Catalyzes the addition of glutamate to the nucleotide precursor UDP-N-acetylmuramoyl-L-alanine (UMA). In Ralstonia nicotianae (strain ATCC BAA-1114 / GMI1000) (Ralstonia solanacearum), this protein is UDP-N-acetylmuramoylalanine--D-glutamate ligase.